A 217-amino-acid chain; its full sequence is Small ribosomal subunit protein uS3c (217 aa).

One can recognise a KH type-2 domain in the interval 43–117; it reads IKNYVQKNRK…KLNIAITRIA (75 aa).

This sequence belongs to the universal ribosomal protein uS3 family. In terms of assembly, part of the 30S ribosomal subunit.

The protein resides in the plastid. Its subcellular location is the chloroplast. This chain is Small ribosomal subunit protein uS3c (rps3), found in Ranunculus macranthus (Large buttercup).